A 185-amino-acid polypeptide reads, in one-letter code: Protein GrpE (185 aa).

A compositionally biased stretch (polar residues) spans 1–11 (MENTQENPTDQ). Residues 1 to 38 (MENTQENPTDQTTEETGREAQAAEPAAQAAENAAPAAE) form a disordered region. The segment covering 19–38 (EAQAAEPAAQAAENAAPAAE) has biased composition (low complexity).

It belongs to the GrpE family. In terms of assembly, homodimer.

Its subcellular location is the cytoplasm. Its function is as follows. Participates actively in the response to hyperosmotic and heat shock by preventing the aggregation of stress-denatured proteins, in association with DnaK and GrpE. It is the nucleotide exchange factor for DnaK and may function as a thermosensor. Unfolded proteins bind initially to DnaJ; upon interaction with the DnaJ-bound protein, DnaK hydrolyzes its bound ATP, resulting in the formation of a stable complex. GrpE releases ADP from DnaK; ATP binding to DnaK triggers the release of the substrate protein, thus completing the reaction cycle. Several rounds of ATP-dependent interactions between DnaJ, DnaK and GrpE are required for fully efficient folding. The chain is Protein GrpE from Burkholderia mallei (strain NCTC 10247).